Here is a 503-residue protein sequence, read N- to C-terminus: ATP synthase subunit alpha (503 aa).

170-177 (GDKQTGKT) contributes to the ATP binding site.

Belongs to the ATPase alpha/beta chains family. In terms of assembly, F-type ATPases have 2 components, CF(1) - the catalytic core - and CF(0) - the membrane proton channel. CF(1) has five subunits: alpha(3), beta(3), gamma(1), delta(1), epsilon(1). CF(0) has three main subunits: a(1), b(2) and c(9-12). The alpha and beta chains form an alternating ring which encloses part of the gamma chain. CF(1) is attached to CF(0) by a central stalk formed by the gamma and epsilon chains, while a peripheral stalk is formed by the delta and b chains.

The protein localises to the cell inner membrane. It catalyses the reaction ATP + H2O + 4 H(+)(in) = ADP + phosphate + 5 H(+)(out). Functionally, produces ATP from ADP in the presence of a proton gradient across the membrane. The alpha chain is a regulatory subunit. The sequence is that of ATP synthase subunit alpha from Helicobacter acinonychis (strain Sheeba).